A 557-amino-acid polypeptide reads, in one-letter code: MHKTDIEIAHTAKKQHITEIAQKIGIAHENLIPYGHDKAKISSSYIKSLNNNPDGKLILVTAINPTPAGEGKTTTTVGLSDALNLIGKKTIATLREPSLGPCFGVKGGAAGGGYAQVIPMDDLNLHFTGDFHAITAAHNLLAAMIDNHIYWGNPLNIDPRRIVWKRVLDMNDRALRDIVISLGGITNGFPRQTGFDITVASEIMALLCLSENLENLTQRLKKIIVAYRHDKTPVTVADLNAEGAMAVLLKDAIQPNLVQTIENNPVLVHGGPFANIAHGCNSVIATKTALKLADYVVTEAGFGADLGAEKFFNIKCRQTGIVPNATVIVATIRALKMNGGVDKNNLTEENITALEKGAANLVRHIKNMALYGIPCVVAINHFDSDSDAEIRTLQKIVATTGHKALICKHWEQGGKGAVALAQELVTLIEKQDSDFKVLYQDDIPLVQKINCIITKLYGGRGAIISATILKQLESWEKEGFGTYPICMAKTPYSFSADPKQYGAPVDFEIPVREVRLCAGAGFIVVICGDVMTMPGLPHYPAAEKIHLDENDQIQGLS.

Residue 66–73 coordinates ATP; sequence TPAGEGKT.

This sequence belongs to the formate--tetrahydrofolate ligase family.

It carries out the reaction (6S)-5,6,7,8-tetrahydrofolate + formate + ATP = (6R)-10-formyltetrahydrofolate + ADP + phosphate. It functions in the pathway one-carbon metabolism; tetrahydrofolate interconversion. The sequence is that of Formate--tetrahydrofolate ligase from Bartonella tribocorum (strain CIP 105476 / IBS 506).